We begin with the raw amino-acid sequence, 488 residues long: Lysine--tRNA ligase (488 aa).

2 residues coordinate Mg(2+): glutamate 397 and glutamate 404.

It belongs to the class-II aminoacyl-tRNA synthetase family. In terms of assembly, homodimer. Requires Mg(2+) as cofactor.

Its subcellular location is the cytoplasm. The enzyme catalyses tRNA(Lys) + L-lysine + ATP = L-lysyl-tRNA(Lys) + AMP + diphosphate. The sequence is that of Lysine--tRNA ligase (lysS) from Mycoplasmopsis fermentans (strain ATCC 19989 / NBRC 14854 / NCTC 10117 / PG18) (Mycoplasma fermentans).